Reading from the N-terminus, the 159-residue chain is Ribosomal RNA large subunit methyltransferase H (159 aa).

S-adenosyl-L-methionine-binding positions include L76, G108, and 127–132 (FGLLTL).

Belongs to the RNA methyltransferase RlmH family. In terms of assembly, homodimer.

Its subcellular location is the cytoplasm. It catalyses the reaction pseudouridine(1915) in 23S rRNA + S-adenosyl-L-methionine = N(3)-methylpseudouridine(1915) in 23S rRNA + S-adenosyl-L-homocysteine + H(+). In terms of biological role, specifically methylates the pseudouridine at position 1915 (m3Psi1915) in 23S rRNA. The chain is Ribosomal RNA large subunit methyltransferase H from Leuconostoc citreum (strain KM20).